Consider the following 237-residue polypeptide: Histone H1E (237 aa).

Residues 1 to 21 are compositionally biased toward low complexity; it reads MSDPAQEVEAPVEAAPVASSP. Disordered stretches follow at residues 1 to 56 and 109 to 237; these read MSDP…PVSE and LQAK…KKAK. Basic and acidic residues predominate over residues 26 to 42; sequence EKAPKAPKAEKPKSDKP. Positions 50-124 constitute an H15 domain; the sequence is THPPVSEMVV…GASGSFKLPP (75 aa). Low complexity predominate over residues 182-195; it reads AKPAAKKAAAPKPK. Over residues 200-209 the composition is skewed to basic and acidic residues; that stretch reads PKKEVKPKKE. A compositionally biased stretch (basic residues) spans 210–237; sequence AKPKKAAAKPAKKPAAKPAKKPAAKKAK.

The protein belongs to the histone H1/H5 family.

The protein resides in the nucleus. It localises to the chromosome. In terms of biological role, histones H1 are necessary for the condensation of nucleosome chains into higher-order structures. In Chironomus tentans (Midge), this protein is Histone H1E.